A 101-amino-acid chain; its full sequence is Large ribosomal subunit protein eL43 (101 aa).

The C4-type zinc-finger motif lies at 40–62 (CPSCRSLVRLKRLAFGIWQCPKC).

It belongs to the eukaryotic ribosomal protein eL43 family. It depends on Zn(2+) as a cofactor.

The polypeptide is Large ribosomal subunit protein eL43 (Pyrobaculum islandicum (strain DSM 4184 / JCM 9189 / GEO3)).